Here is a 214-residue protein sequence, read N- to C-terminus: Rac-like GTP-binding protein 1 (214 aa).

Residues 17–24, 20–25, Thr42, 64–68, Gly67, 122–125, 123–125, and 164–165 each bind GTP; these read GDGAVGKT, AVGKTC, DTAGQ, TKLD, KLD, and SK. Residues 39–47 carry the Effector region motif; sequence YIPTVFDNF.

It belongs to the small GTPase superfamily. Rho family. In terms of assembly, may interact with MPK1/MAPK6. Binds to RBOHB, preferentially in the GTP-bound form. Interacts with CCR1 in a GTP-dependent manner. May be palmitoylated.

The protein localises to the cytoplasm. It localises to the membrane. Small GTPase playing a general role in disease resistance signaling pathway. Acts downstream of heterotrimeric G protein alpha subunit. Regulates cell death and reactive oxygen species production, probably through NADPH oxidase. Also involved in sphingolipid elicitor (SE)-dependent defense signaling. Activates phytoalexin production and alters defense-related genes. Down-regulates metallothionein 2b, a reactive oxygen scavenger. May control lignin synthesis through regulation of both NADPH oxidase and CCR1 activities during defense responses. Stimulates lignin synthesis in suspension cell culture. In Oryza sativa subsp. japonica (Rice), this protein is Rac-like GTP-binding protein 1 (RAC1).